The chain runs to 624 residues: ATP-dependent RNA helicase MRH4, mitochondrial (624 aa).

A mitochondrion-targeting transit peptide spans 1–43 (MSPVASTCLLCEMRTVVWGWQPAVPQPWHFVRFASSARLARRK). The disordered stretch occupies residues 41 to 120 (RRKPARMALS…KDAADKKQDG (80 aa)). Residues 86–119 (RLPDRPIPRSDAELKRSSSDLNNKEKDAADKKQD) show a composition bias toward basic and acidic residues. The Q motif motif lies at 151 to 184 (TSFDQFPLLPQVREAVYANAFPTLTEISPTPIQR). Residues 212–427 (EEELFHFDQF…EKKFPEMKRL (216 aa)) form the Helicase ATP-binding domain. 225–232 (AETGTGKT) serves as a coordination point for ATP. A DEAD box motif is present at residues 374 to 377 (DEAD). A Helicase C-terminal domain is found at 438–624 (RVQLGVVDVD…EAMFRGQALI (187 aa)).

The protein belongs to the DEAD box helicase family. MRH4 subfamily.

It localises to the mitochondrion. The catalysed reaction is ATP + H2O = ADP + phosphate + H(+). In terms of biological role, ATP-binding RNA helicase involved in mitochondrial RNA metabolism. Required for maintenance of mitochondrial DNA. This is ATP-dependent RNA helicase MRH4, mitochondrial (MRH4) from Ajellomyces capsulatus (strain NAm1 / WU24) (Darling's disease fungus).